Consider the following 159-residue polypeptide: uncharacterized protein (159 aa).

Disordered stretches follow at residues 1–23 (MEQD…KGQA) and 91–110 (AGGG…GPAA).

This is an uncharacterized protein from Homo sapiens (Human).